The chain runs to 420 residues: Mitogen-activated protein kinase HOG2 (420 aa).

Residues 29-37 (VGMGAFGLV) and Lys-52 each bind ATP. Asp-144 serves as the catalytic Proton acceptor. A Phosphothreonine modification is found at Thr-174. The TXY motif lies at 174 to 176 (TGY). At Tyr-176 the chain carries Phosphotyrosine. Positions 372–394 (AQHHHQTQQQSSGKHTNPTTSSS) are disordered.

This sequence belongs to the protein kinase superfamily. Ser/Thr protein kinase family. MAP kinase subfamily. HOG1 sub-subfamily. Mg(2+) is required as a cofactor. Dually phosphorylated on Thr-174 and Tyr-176, which activates the enzyme.

It localises to the cytoplasm. Its subcellular location is the nucleus. It carries out the reaction L-seryl-[protein] + ATP = O-phospho-L-seryl-[protein] + ADP + H(+). The enzyme catalyses L-threonyl-[protein] + ATP = O-phospho-L-threonyl-[protein] + ADP + H(+). Activated by tyrosine and threonine phosphorylation. In terms of biological role, mitogen-activated protein kinase involved in a signal transduction pathway that is activated by changes in the osmolarity of the extracellular environment. Controls osmotic regulation of transcription of target genes. This Zygosaccharomyces rouxii protein is Mitogen-activated protein kinase HOG2 (HOG2).